Reading from the N-terminus, the 100-residue chain is Large ribosomal subunit protein uL23 (100 aa).

Belongs to the universal ribosomal protein uL23 family. As to quaternary structure, part of the 50S ribosomal subunit. Contacts protein L29, and trigger factor when it is bound to the ribosome.

One of the early assembly proteins it binds 23S rRNA. One of the proteins that surrounds the polypeptide exit tunnel on the outside of the ribosome. Forms the main docking site for trigger factor binding to the ribosome. The protein is Large ribosomal subunit protein uL23 of Mycobacterium tuberculosis (strain ATCC 25177 / H37Ra).